A 338-amino-acid polypeptide reads, in one-letter code: D-erythrose-4-phosphate dehydrogenase (338 aa).

11 to 12 is a binding site for NAD(+); the sequence is RI. Residues 153-155, R199, 212-213, and R235 contribute to the substrate site; these read SCT and TK. The active-site Nucleophile is the C154. Residue N317 participates in NAD(+) binding.

This sequence belongs to the glyceraldehyde-3-phosphate dehydrogenase family. Epd subfamily. As to quaternary structure, homotetramer.

It is found in the cytoplasm. The catalysed reaction is D-erythrose 4-phosphate + NAD(+) + H2O = 4-phospho-D-erythronate + NADH + 2 H(+). The protein operates within cofactor biosynthesis; pyridoxine 5'-phosphate biosynthesis; pyridoxine 5'-phosphate from D-erythrose 4-phosphate: step 1/5. Its function is as follows. Catalyzes the NAD-dependent conversion of D-erythrose 4-phosphate to 4-phosphoerythronate. This is D-erythrose-4-phosphate dehydrogenase from Shewanella loihica (strain ATCC BAA-1088 / PV-4).